Here is a 613-residue protein sequence, read N- to C-terminus: Envelope glycoprotein gp95 (613 aa).

The first 62 residues, 1 to 62 (MEAVIKAVLT…VLCEVTGVRA (62 aa)), serve as a signal peptide directing secretion. The interval 14–36 (GETSKKDSKKKPPATSKKDPEKT) is disordered. At 63 to 559 (DVHLLEQPGN…EWAVHLLKGL (497 aa)) the chain is on the extracellular side. Cystine bridges form between Cys-87–Cys-506, Cys-121–Cys-151, Cys-191–Cys-252, Cys-265–Cys-275, Cys-360–Cys-377, Cys-417–Cys-453, and Cys-498–Cys-505. Asn-120, Asn-140, Asn-157, Asn-177, Asn-230, Asn-264, Asn-271, Asn-297, Asn-303, Asn-313, and Asn-321 each carry an N-linked (GlcNAc...) asparagine; by host glycan. The interval 184–233 (IPSVAGGCIGFTPYDSPAGVYGWDRREVTHILLTDPGNNPFFDKASNSSK) is binding to host receptor. The tract at residues 268–294 (MRQNWSICQDVWGRGPPENWCTSTGGT) is binding to host receptor. N-linked (GlcNAc...) asparagine; by host glycans are attached at residues Asn-388 and Asn-398. Positions 425–445 (GPTARIFASILAPGVAAAQAL) are fusion peptide. Asn-460 is a glycosylation site (N-linked (GlcNAc...) asparagine; by host). The immunosuppression stretch occupies residues 481 to 497 (LQNRAAIDFLLLAHGHG). Asn-508 carries N-linked (GlcNAc...) asparagine; by host glycosylation. A helical membrane pass occupies residues 560–580 (LLGLVVILLLVVCLPCLLQIV). 2 S-palmitoyl cysteine; by host lipidation sites follow: Cys-572 and Cys-575. Topologically, residues 581–613 (CGNIRKMINNSISYHTEYKKLQKAYGQPESRIV) are extracellular. N-linked (GlcNAc...) asparagine; by host glycosylation is present at Asn-589.

The protein belongs to the Alpharetroviruses envelope glycoprotein family. As to quaternary structure, heterodimer with the transmembrane protein. The mature envelope protein (Env) consists of a trimer of SU-TM heterodimers attached by a labile interchain disulfide bond. Interacts with the host cell entry receptor TVB-S3; this interaction allows the viral attachment. In terms of assembly, heterodimer with the surface protein. The mature envelope protein (Env) consists of a trimer of SU-TM heterodimers attached by a labile interchain disulfide bond. Post-translationally, specific enzymatic cleavages in vivo yield mature proteins. Envelope glycoproteins are synthesized as an inactive precursor that is N-glycosylated and processed likely by host cell furin or by a furin-like protease in the Golgi to yield the mature SU and TM proteins. The cleavage site between SU and TM requires the minimal sequence [KR]-X-[KR]-R. In terms of processing, the transmembrane protein is palmitoylated. Palmitoylation is necessary for glycoprotein function and infectivity.

It is found in the virion membrane. The protein resides in the host cell membrane. In terms of biological role, the surface protein (SU) attaches the virus to the host cell entry receptor TVB-S3/CAR1. This interaction triggers the refolding of the transmembrane protein (TM) thereby unmasking its fusion peptide and the formation of a reactive thiolate on Cys-100 to activate its fusogenic potential. Fusion occurs at the host cell plasma membrane. Functionally, the transmembrane protein (TM) acts as a class I viral fusion protein. Under the current model, the protein has at least 3 conformational states: pre-fusion native state, pre-hairpin intermediate state, and post-fusion hairpin state. During viral and target cell membrane fusion, the coiled coil regions (heptad repeats) assume a trimer-of-hairpins structure, positioning the fusion peptide in close proximity to the C-terminal region of the ectodomain. The formation of this structure appears to drive apposition and subsequent fusion of viral and target cell membranes. Membranes fusion leads to delivery of the nucleocapsid into the cytoplasm. This is Envelope glycoprotein gp95 (env) from Rous sarcoma virus subgroup B (strain Schmidt-Ruppin) (RSV-SR-B).